The primary structure comprises 155 residues: Ribosome maturation factor RimP (155 aa).

It belongs to the RimP family.

It localises to the cytoplasm. Functionally, required for maturation of 30S ribosomal subunits. The sequence is that of Ribosome maturation factor RimP from Synechococcus sp. (strain CC9605).